The following is a 584-amino-acid chain: Isocitrate dehydrogenase kinase/phosphatase (584 aa).

ATP is bound by residues A315–M321 and K336. D371 is a catalytic residue.

Belongs to the AceK family.

It is found in the cytoplasm. It carries out the reaction L-seryl-[isocitrate dehydrogenase] + ATP = O-phospho-L-seryl-[isocitrate dehydrogenase] + ADP + H(+). Bifunctional enzyme which can phosphorylate or dephosphorylate isocitrate dehydrogenase (IDH) on a specific serine residue. This is a regulatory mechanism which enables bacteria to bypass the Krebs cycle via the glyoxylate shunt in response to the source of carbon. When bacteria are grown on glucose, IDH is fully active and unphosphorylated, but when grown on acetate or ethanol, the activity of IDH declines drastically concomitant with its phosphorylation. The protein is Isocitrate dehydrogenase kinase/phosphatase of Serratia proteamaculans (strain 568).